Reading from the N-terminus, the 227-residue chain is Thymidylate synthase (227 aa).

89-90 (RR) serves as a coordination point for dUMP. Residue Cys109 is the Nucleophile of the active site. DUMP is bound by residues 129 to 132 (RSND), Asn140, and 170 to 172 (HVY). Asp132 serves as a coordination point for (6R)-5,10-methylene-5,6,7,8-tetrahydrofolate.

This sequence belongs to the thymidylate synthase family. Bacterial-type ThyA subfamily. In terms of assembly, homodimer.

It is found in the cytoplasm. The enzyme catalyses dUMP + (6R)-5,10-methylene-5,6,7,8-tetrahydrofolate = 7,8-dihydrofolate + dTMP. Its pathway is pyrimidine metabolism; dTTP biosynthesis. In terms of biological role, catalyzes the reductive methylation of 2'-deoxyuridine-5'-monophosphate (dUMP) to 2'-deoxythymidine-5'-monophosphate (dTMP) while utilizing 5,10-methylenetetrahydrofolate (mTHF) as the methyl donor and reductant in the reaction, yielding dihydrofolate (DHF) as a by-product. This enzymatic reaction provides an intracellular de novo source of dTMP, an essential precursor for DNA biosynthesis. The chain is Thymidylate synthase from Bacillus atrophaeus.